Here is a 638-residue protein sequence, read N- to C-terminus: Growth hormone receptor (638 aa).

The N-terminal stretch at 1-18 (MDLWQLLLTLALAGSSDA) is a signal peptide. Residues 19–264 (FSGSEPTAAI…NQFTCEEDFY (246 aa)) lie on the Extracellular side of the membrane. Asn-46 carries an N-linked (GlcNAc...) asparagine glycan. 2 disulfide bridges follow: Cys-56-Cys-66 and Cys-101-Cys-112. N-linked (GlcNAc...) asparagine glycosylation occurs at Asn-115. Residues Cys-126 and Cys-140 are joined by a disulfide bond. The 104-residue stretch at 151 to 254 (PPIALNWTLL…EVLYVTLPQM (104 aa)) folds into the Fibronectin type-III domain. Asn-156, Asn-161, and Asn-200 each carry an N-linked (GlcNAc...) asparagine glycan. Residues 240–244 (YGEFS) carry the WSXWS motif motif. The chain crosses the membrane as a helical span at residues 265–288 (FPWLLIIIFGIFGLTVMLFVFLFS). Residues 289–638 (KQQRIKMLIL…STDQLNKIMP (350 aa)) lie on the Cytoplasmic side of the membrane. The segment at 294-379 (KMLILPPVPV…HQKSHSNLGV (86 aa)) is required for JAK2 binding. Residues 297 to 305 (ILPPVPVPK) carry the Box 1 motif motif. The UbE motif motif lies at 340-349 (DSWVEFIELD). At Ser-341 the chain carries Phosphoserine. Residues 353–388 (PDEKNEGSDTDRLLSSDHQKSHSNLGVKDGDSGRTS) form a disordered region. A compositionally biased stretch (basic and acidic residues) spans 356-372 (KNEGSDTDRLLSSDHQK). Phosphotyrosine is present on residues Tyr-487 and Tyr-595.

This sequence belongs to the type I cytokine receptor family. Type 1 subfamily. In terms of assembly, on growth hormone (GH) binding, forms homodimers and binds JAK2 via a box 1-containing domain. In terms of processing, the soluble form (GHBP) is produced by phorbol ester-promoted proteolytic cleavage at the cell surface (shedding) by ADAM17/TACE. Shedding is inhibited by growth hormone (GH) binding to the receptor probably due to a conformational change in GHR rendering the receptor inaccessible to ADAM17. On GH binding, phosphorylated on tyrosine residues in the cytoplasmic domain by JAK2. Post-translationally, ubiquitinated by the ECS(SOCS2) complex following ligand-binding and phosphorylation by JAK2, leading to its degradation by the proteasome. Regulation by the ECS(SOCS2) complex acts as a negative feedback loop of growth hormone receptor signaling. Ubiquitination is not sufficient for GHR internalization.

It localises to the cell membrane. The protein resides in the secreted. Its function is as follows. Receptor for pituitary gland growth hormone (GH1) involved in regulating postnatal body growth. On ligand binding, couples to the JAK2/STAT5 pathway. Functionally, the soluble form (GHBP) acts as a reservoir of growth hormone in plasma and may be a modulator/inhibitor of GH signaling. In Papio anubis (Olive baboon), this protein is Growth hormone receptor (GHR).